The chain runs to 163 residues: Ubiquitin-like protein 1-ribosomal protein eS31 fusion protein (163 aa).

In terms of domain architecture, Ubiquitin-like spans 1–70; the sequence is MVFVKTLNRT…IYVNLELLGG (70 aa). Gly-70 participates in a covalent cross-link: Glycyl lysine isopeptide (Gly-Lys) (interchain with K-? in acceptor proteins). Residues 115 to 138 form a C4-type zinc finger; it reads CQQPSCGGGVFMAQHANRHYCGRC.

The protein in the N-terminal section; belongs to the ubiquitin family. This sequence in the C-terminal section; belongs to the eukaryotic ribosomal protein eS31 family.

This Caenorhabditis briggsae protein is Ubiquitin-like protein 1-ribosomal protein eS31 fusion protein (ubl-1).